We begin with the raw amino-acid sequence, 127 residues long: Fluoride-specific ion channel FluC (127 aa).

A run of 4 helical transmembrane segments spans residues 4-24 (IMLA…WLGL), 35-55 (VGTL…LAWF), 71-91 (TGLC…VFLL), and 101-121 (LNVA…FWLF). The Na(+) site is built by glycine 75 and threonine 78.

This sequence belongs to the fluoride channel Fluc/FEX (TC 1.A.43) family.

The protein resides in the cell inner membrane. The enzyme catalyses fluoride(in) = fluoride(out). Na(+) is not transported, but it plays an essential structural role and its presence is essential for fluoride channel function. Its function is as follows. Fluoride-specific ion channel. Important for reducing fluoride concentration in the cell, thus reducing its toxicity. The protein is Fluoride-specific ion channel FluC of Cronobacter sakazakii (strain ATCC BAA-894) (Enterobacter sakazakii).